The following is a 194-amino-acid chain: Peptidyl-tRNA hydrolase (194 aa).

Y21 contacts tRNA. The active-site Proton acceptor is H26. The tRNA site is built by Y72, N74, and N120.

Belongs to the PTH family. In terms of assembly, monomer.

It is found in the cytoplasm. The enzyme catalyses an N-acyl-L-alpha-aminoacyl-tRNA + H2O = an N-acyl-L-amino acid + a tRNA + H(+). Its function is as follows. Hydrolyzes ribosome-free peptidyl-tRNAs (with 1 or more amino acids incorporated), which drop off the ribosome during protein synthesis, or as a result of ribosome stalling. Catalyzes the release of premature peptidyl moieties from peptidyl-tRNA molecules trapped in stalled 50S ribosomal subunits, and thus maintains levels of free tRNAs and 50S ribosomes. This chain is Peptidyl-tRNA hydrolase, found in Halorhodospira halophila (strain DSM 244 / SL1) (Ectothiorhodospira halophila (strain DSM 244 / SL1)).